A 217-amino-acid polypeptide reads, in one-letter code: Coiled-coil domain-containing protein 124-A (217 aa).

The tract at residues 1 to 128 (MPKKFQGENT…HLEMPLEENV (128 aa)) is disordered. Basic and acidic residues-rich tracts occupy residues 18–45 (RKAE…DDKH), 52–74 (RKED…QRLL), and 95–128 (TRAE…EENV). Residues 46 to 82 (VARKGQRKEDKEKKRLEQLERKKESQRLLDEEDSKMK) adopt a coiled-coil conformation.

This sequence belongs to the CCDC124 family. Associates with translationally inactive ribosomes in the nonrotated state.

The protein resides in the cytoplasm. It localises to the cytoskeleton. It is found in the microtubule organizing center. Its subcellular location is the centrosome. The protein localises to the midbody. Ribosome-binding protein involved in ribosome hibernation: associates with translationally inactive ribosomes and stabilizes the nonrotated conformation of the 80S ribosome, thereby promoting ribosome preservation and storage. The polypeptide is Coiled-coil domain-containing protein 124-A (ccdc124-a) (Xenopus laevis (African clawed frog)).